Here is a 219-residue protein sequence, read N- to C-terminus: Cytidylate kinase (219 aa).

Glycine 10–threonine 18 is an ATP binding site.

The protein belongs to the cytidylate kinase family. Type 1 subfamily.

It is found in the cytoplasm. It carries out the reaction CMP + ATP = CDP + ADP. The catalysed reaction is dCMP + ATP = dCDP + ADP. The polypeptide is Cytidylate kinase (Staphylococcus aureus (strain MRSA252)).